The sequence spans 395 residues: Tyrosine--tRNA ligase (395 aa).

The 'HIGH' region signature appears at 42–51 (PTAPDIHLGH). The 'KMSKS' region motif lies at 226–230 (KMSKS). An ATP-binding site is contributed by lysine 229. The region spanning 334–394 (IGLANLLKEA…GKRKFARVTV (61 aa)) is the S4 RNA-binding domain.

It belongs to the class-I aminoacyl-tRNA synthetase family. TyrS type 2 subfamily. As to quaternary structure, homodimer.

It localises to the cytoplasm. The catalysed reaction is tRNA(Tyr) + L-tyrosine + ATP = L-tyrosyl-tRNA(Tyr) + AMP + diphosphate + H(+). In terms of biological role, catalyzes the attachment of tyrosine to tRNA(Tyr) in a two-step reaction: tyrosine is first activated by ATP to form Tyr-AMP and then transferred to the acceptor end of tRNA(Tyr). The chain is Tyrosine--tRNA ligase from Mannheimia succiniciproducens (strain KCTC 0769BP / MBEL55E).